The chain runs to 918 residues: Protein translocase subunit SecA (918 aa).

Residues glutamine 87, 105–109 (GEGKT), and aspartate 516 each bind ATP. Zn(2+) contacts are provided by cysteine 902, cysteine 904, cysteine 913, and histidine 914.

It belongs to the SecA family. As to quaternary structure, monomer and homodimer. Part of the essential Sec protein translocation apparatus which comprises SecA, SecYEG and auxiliary proteins SecDF-YajC and YidC. Zn(2+) is required as a cofactor.

It localises to the cell inner membrane. The protein resides in the cytoplasm. The enzyme catalyses ATP + H2O + cellular proteinSide 1 = ADP + phosphate + cellular proteinSide 2.. In terms of biological role, part of the Sec protein translocase complex. Interacts with the SecYEG preprotein conducting channel. Has a central role in coupling the hydrolysis of ATP to the transfer of proteins into and across the cell membrane, serving both as a receptor for the preprotein-SecB complex and as an ATP-driven molecular motor driving the stepwise translocation of polypeptide chains across the membrane. The chain is Protein translocase subunit SecA from Methylibium petroleiphilum (strain ATCC BAA-1232 / LMG 22953 / PM1).